We begin with the raw amino-acid sequence, 505 residues long: Probable cytosol aminopeptidase (505 aa).

Residues lysine 268 and aspartate 273 each contribute to the Mn(2+) site. Residue lysine 280 is part of the active site. Residues aspartate 291, aspartate 350, and glutamate 352 each coordinate Mn(2+). Residue arginine 354 is part of the active site.

Belongs to the peptidase M17 family. The cofactor is Mn(2+).

The protein resides in the cytoplasm. The catalysed reaction is Release of an N-terminal amino acid, Xaa-|-Yaa-, in which Xaa is preferably Leu, but may be other amino acids including Pro although not Arg or Lys, and Yaa may be Pro. Amino acid amides and methyl esters are also readily hydrolyzed, but rates on arylamides are exceedingly low.. It catalyses the reaction Release of an N-terminal amino acid, preferentially leucine, but not glutamic or aspartic acids.. Presumably involved in the processing and regular turnover of intracellular proteins. Catalyzes the removal of unsubstituted N-terminal amino acids from various peptides. The chain is Probable cytosol aminopeptidase from Syntrophobacter fumaroxidans (strain DSM 10017 / MPOB).